We begin with the raw amino-acid sequence, 68 residues long: Copper transport protein ATOX1 (68 aa).

Residues 1 to 63 form the HMA domain; it reads MPKHEFSVDM…TLKKTGKTVS (63 aa). Cu cation-binding residues include C12 and C15. At S47 the chain carries Phosphoserine. The residue at position 60 (K60) is an N6-acetyllysine.

It belongs to the ATX1 family. Homodimer. Interacts with ATP7B. Interacts with ATP7A. Interacts (via dimer form) with SLC31A1 (via C-terminal domain); this interaction improves ATOX1 stability and controls intracellular Cu(I) levels. Ubiquitous.

Functionally, binds and deliver cytosolic copper to the copper ATPase proteins. May be important in cellular antioxidant defense. The chain is Copper transport protein ATOX1 from Homo sapiens (Human).